The sequence spans 307 residues: Zinc-alpha-2-glycoprotein (307 aa).

Positions Met-1–Phe-17 are cleaved as a signal peptide. Gln-18 is modified (pyrrolidone carboxylic acid). Cys-118 and Cys-181 form a disulfide bridge. Asn-123, Asn-190, and Asn-254 each carry an N-linked (GlcNAc...) asparagine glycan. Residues Pro-202–Ser-287 form the Ig-like C1-type domain. An intrachain disulfide couples Cys-220 to Cys-275.

The protein belongs to the MHC class I family. Interacts with PIP.

Its subcellular location is the secreted. In terms of biological role, stimulates lipid degradation in adipocytes and causes the extensive fat losses associated with some advanced cancers. This chain is Zinc-alpha-2-glycoprotein (Azgp1), found in Mus musculus (Mouse).